A 73-amino-acid polypeptide reads, in one-letter code: Conotoxin Vc6.17 (73 aa).

The N-terminal stretch at M1–A19 is a signal peptide. Positions L20–H44 are excised as a propeptide. 3 cysteine pairs are disulfide-bonded: C48–C62, C55–C66, and C61–C71.

Belongs to the conotoxin O2 superfamily. Expressed by the venom duct.

It localises to the secreted. Inhibits voltage-gated ion channels. The protein is Conotoxin Vc6.17 of Conus victoriae (Queen Victoria cone).